Consider the following 74-residue polypeptide: UPF0741 protein BcerKBAB4_5177 (74 aa).

Belongs to the UPF0741 family.

The sequence is that of UPF0741 protein BcerKBAB4_5177 from Bacillus mycoides (strain KBAB4) (Bacillus weihenstephanensis).